The primary structure comprises 883 residues: Phosphoenolpyruvate carboxylase (883 aa).

Catalysis depends on residues H138 and K546.

The protein belongs to the PEPCase type 1 family. Mg(2+) is required as a cofactor.

The enzyme catalyses oxaloacetate + phosphate = phosphoenolpyruvate + hydrogencarbonate. Its function is as follows. Forms oxaloacetate, a four-carbon dicarboxylic acid source for the tricarboxylic acid cycle. In Escherichia fergusonii (strain ATCC 35469 / DSM 13698 / CCUG 18766 / IAM 14443 / JCM 21226 / LMG 7866 / NBRC 102419 / NCTC 12128 / CDC 0568-73), this protein is Phosphoenolpyruvate carboxylase.